The primary structure comprises 349 residues: tRNA pseudouridine synthase D (349 aa).

Phe-27 is a binding site for substrate. The active-site Nucleophile is the Asp-80. Asn-129 contacts substrate. A TRUD domain is found at 155-303; sequence GVPNYFGAQR…VEAARRAMLL (149 aa). Phe-329 serves as a coordination point for substrate.

Belongs to the pseudouridine synthase TruD family.

It catalyses the reaction uridine(13) in tRNA = pseudouridine(13) in tRNA. Its function is as follows. Responsible for synthesis of pseudouridine from uracil-13 in transfer RNAs. This is tRNA pseudouridine synthase D from Escherichia coli (strain 55989 / EAEC).